A 291-amino-acid chain; its full sequence is Acetylglutamate kinase (291 aa).

Residues 61–62 (GG), Arg-83, and Asn-187 contribute to the substrate site.

The protein belongs to the acetylglutamate kinase family. ArgB subfamily.

The protein resides in the cytoplasm. The catalysed reaction is N-acetyl-L-glutamate + ATP = N-acetyl-L-glutamyl 5-phosphate + ADP. It functions in the pathway amino-acid biosynthesis; L-arginine biosynthesis; N(2)-acetyl-L-ornithine from L-glutamate: step 2/4. Its function is as follows. Catalyzes the ATP-dependent phosphorylation of N-acetyl-L-glutamate. This chain is Acetylglutamate kinase, found in Methanoregula boonei (strain DSM 21154 / JCM 14090 / 6A8).